The chain runs to 585 residues: Glutamate decarboxylase (585 aa).

Polar residues predominate over residues 35–56; sequence KSAVQSGHQGSNNMRDTSSQGM. The tract at residues 35-60 is disordered; the sequence is KSAVQSGHQGSNNMRDTSSQGMANKY. An N6-(pyridoxal phosphate)lysine modification is found at Lys318.

Belongs to the group II decarboxylase family. The cofactor is pyridoxal 5'-phosphate.

The catalysed reaction is L-glutamate + H(+) = 4-aminobutanoate + CO2. In Saccharomyces cerevisiae (strain ATCC 204508 / S288c) (Baker's yeast), this protein is Glutamate decarboxylase (GAD1).